We begin with the raw amino-acid sequence, 137 residues long: ATP synthase epsilon chain (137 aa).

It belongs to the ATPase epsilon chain family. As to quaternary structure, F-type ATPases have 2 components, CF(1) - the catalytic core - and CF(0) - the membrane proton channel. CF(1) has five subunits: alpha(3), beta(3), gamma(1), delta(1), epsilon(1). CF(0) has three main subunits: a, b and c.

Its subcellular location is the cellular thylakoid membrane. In terms of biological role, produces ATP from ADP in the presence of a proton gradient across the membrane. This chain is ATP synthase epsilon chain, found in Synechococcus sp. (strain JA-2-3B'a(2-13)) (Cyanobacteria bacterium Yellowstone B-Prime).